Here is a 689-residue protein sequence, read N- to C-terminus: Glycine--tRNA ligase beta subunit (689 aa).

It belongs to the class-II aminoacyl-tRNA synthetase family. As to quaternary structure, tetramer of two alpha and two beta subunits.

The protein localises to the cytoplasm. The catalysed reaction is tRNA(Gly) + glycine + ATP = glycyl-tRNA(Gly) + AMP + diphosphate. This Mannheimia succiniciproducens (strain KCTC 0769BP / MBEL55E) protein is Glycine--tRNA ligase beta subunit.